We begin with the raw amino-acid sequence, 970 residues long: Protein bicaudal C homolog 1-B (970 aa).

Residues 1-50 (MAAQCGGYMNQSDPGSNSERSADSPLPGSEDDSPGSAAPHDPEWREERFR) are disordered. A compositionally biased stretch (polar residues) spans 9–19 (MNQSDPGSNSE). Residues 40 to 50 (HDPEWREERFR) show a composition bias toward basic and acidic residues. 2 KH domains span residues 130 to 197 (RVTL…RVRI) and 282 to 346 (PVST…RQYL). Positions 596–605 (EASRQSNNHS) are enriched in polar residues. 3 disordered regions span residues 596–638 (EASR…SANT), 677–696 (SDSEMSPTEGPMTDKKAPGS), and 773–841 (RRAN…NKSA). Residues 606–616 (SAEEVNSKTDS) show a composition bias toward basic and acidic residues. Polar residues-rich tracts occupy residues 783–810 (TMSTTYENSPMSLSRSNSREQLGNGSDS) and 819–831 (IDSSHNDYSSSIG). Residues 869 to 932 (FKGSDLPELF…LLAISELNKN (64 aa)) form the SAM domain.

Belongs to the BicC family.

Putative RNA-binding protein. May be involved in regulating gene expression during embryonic development. Seems to be involved in endoderm formation. Ectopic expression results in endoderm formation in the absence of mesoderm induction. In Xenopus laevis (African clawed frog), this protein is Protein bicaudal C homolog 1-B (bicc1-b).